Consider the following 224-residue polypeptide: UPF0758 protein CV_3079 (224 aa).

In terms of domain architecture, MPN spans 102 to 224; it reads ALSSPQQVRD…AESFAERGWL (123 aa). 3 residues coordinate Zn(2+): H173, H175, and D186. Residues 173–186 carry the JAMM motif motif; the sequence is HNHPSGVSEPSSAD.

The protein belongs to the UPF0758 family.

This is UPF0758 protein CV_3079 from Chromobacterium violaceum (strain ATCC 12472 / DSM 30191 / JCM 1249 / CCUG 213 / NBRC 12614 / NCIMB 9131 / NCTC 9757 / MK).